We begin with the raw amino-acid sequence, 231 residues long: Small ribosomal subunit protein uS3 (231 aa).

Positions isoleucine 39 to arginine 107 constitute a KH type-2 domain.

It belongs to the universal ribosomal protein uS3 family. As to quaternary structure, part of the 30S ribosomal subunit. Forms a tight complex with proteins S10 and S14.

Its function is as follows. Binds the lower part of the 30S subunit head. Binds mRNA in the 70S ribosome, positioning it for translation. This is Small ribosomal subunit protein uS3 from Rhizorhabdus wittichii (strain DSM 6014 / CCUG 31198 / JCM 15750 / NBRC 105917 / EY 4224 / RW1) (Sphingomonas wittichii).